The chain runs to 157 residues: 2-C-methyl-D-erythritol 2,4-cyclodiphosphate synthase (157 aa).

A divalent metal cation contacts are provided by Asp8 and His10. Residues 8-10 and 34-35 each bind 4-CDP-2-C-methyl-D-erythritol 2-phosphate; these read DVH and HS. His42 is a binding site for a divalent metal cation. Residues 56 to 58, 61 to 65, 100 to 106, 132 to 135, Phe139, and Arg142 contribute to the 4-CDP-2-C-methyl-D-erythritol 2-phosphate site; these read DIG, FPDTD, AQAPKMA, and TTEE.

The protein belongs to the IspF family. Homotrimer. A divalent metal cation is required as a cofactor.

The catalysed reaction is 4-CDP-2-C-methyl-D-erythritol 2-phosphate = 2-C-methyl-D-erythritol 2,4-cyclic diphosphate + CMP. Its pathway is isoprenoid biosynthesis; isopentenyl diphosphate biosynthesis via DXP pathway; isopentenyl diphosphate from 1-deoxy-D-xylulose 5-phosphate: step 4/6. Its function is as follows. Involved in the biosynthesis of isopentenyl diphosphate (IPP) and dimethylallyl diphosphate (DMAPP), two major building blocks of isoprenoid compounds. Catalyzes the conversion of 4-diphosphocytidyl-2-C-methyl-D-erythritol 2-phosphate (CDP-ME2P) to 2-C-methyl-D-erythritol 2,4-cyclodiphosphate (ME-CPP) with a corresponding release of cytidine 5-monophosphate (CMP). The sequence is that of 2-C-methyl-D-erythritol 2,4-cyclodiphosphate synthase from Pseudomonas entomophila (strain L48).